Consider the following 159-residue polypeptide: MNNSSLENSASLKVILKQRKKKRLLIILLCCLVMAIAASLVVYAMRHAVSFFRMPSEITREDILTGRPLRLGGFVEKGTVRYVGESGVIFFVTDNKKHEKVVFNGALPDLFREGQGVIVEGHFDKQGFFIGTRILAKHDATYMPKETVDRLKKHYSVEK.

The Cytoplasmic portion of the chain corresponds to 1–23 (MNNSSLENSASLKVILKQRKKKR). Residues 24-44 (LLIILLCCLVMAIAASLVVYA) traverse the membrane as a helical; Signal-anchor for type II membrane protein segment. Topologically, residues 45–159 (MRHAVSFFRM…RLKKHYSVEK (115 aa)) are periplasmic. Heme contacts are provided by His138 and Tyr142.

It belongs to the CcmE/CycJ family.

It is found in the cell inner membrane. Heme chaperone required for the biogenesis of c-type cytochromes. Transiently binds heme delivered by CcmC and transfers the heme to apo-cytochromes in a process facilitated by CcmF and CcmH. This Bartonella tribocorum (strain CIP 105476 / IBS 506) protein is Cytochrome c-type biogenesis protein CcmE.